Consider the following 97-residue polypeptide: Unclassified hydrophobin F (97 aa).

A signal peptide spans 1 to 17 (MRVSALAFAAVLSLVSA). 4 disulfide bridges follow: Cys24-Cys75, Cys39-Cys67, Cys40-Cys58, and Cys76-Cys85.

It localises to the secreted. The protein resides in the cell wall. Aerial growth, conidiation, and dispersal of filamentous fungi in the environment rely upon a capability of their secreting small amphipathic proteins called hydrophobins (HPBs) with low sequence identity. Class I can self-assemble into an outermost layer of rodlet bundles on aerial cell surfaces, conferring cellular hydrophobicity that supports fungal growth, development and dispersal; whereas Class II form highly ordered films at water-air interfaces through intermolecular interactions but contribute nothing to the rodlet structure. In P.expansum, hydrophobins contribute to germination, tolerance to cold stress and mycotoxins patulin and citrinin production. HfbC, HfbD, HfbE, and HfbF have functional redundancy in fungal surface hydrophobicity. The sequence is that of Unclassified hydrophobin F from Penicillium expansum (Blue mold rot fungus).